A 146-amino-acid chain; its full sequence is UPF0742 protein SPAC977.02 (146 aa).

A helical membrane pass occupies residues 38–60 (LTVKYCLAVKLLIYLLYCWYIYS).

The protein belongs to the UPF0742 family.

Its subcellular location is the cytoplasm. It is found in the nucleus membrane. The polypeptide is UPF0742 protein SPAC977.02 (Schizosaccharomyces pombe (strain 972 / ATCC 24843) (Fission yeast)).